The chain runs to 462 residues: CCA-adding enzyme (462 aa).

ATP-binding residues include Ser-54 and Arg-57. CTP contacts are provided by Ser-54 and Arg-57. The Mg(2+) site is built by Asp-66, Asp-68, and Asp-117. Residues His-140, Lys-160, and Tyr-169 each coordinate ATP. CTP is bound by residues His-140, Lys-160, and Tyr-169.

It belongs to the tRNA nucleotidyltransferase/poly(A) polymerase family. Archaeal CCA-adding enzyme subfamily. As to quaternary structure, homodimer. Mg(2+) serves as cofactor.

The enzyme catalyses a tRNA precursor + 2 CTP + ATP = a tRNA with a 3' CCA end + 3 diphosphate. It carries out the reaction a tRNA with a 3' CCA end + 2 CTP + ATP = a tRNA with a 3' CCACCA end + 3 diphosphate. Catalyzes the addition and repair of the essential 3'-terminal CCA sequence in tRNAs without using a nucleic acid template. Adds these three nucleotides in the order of C, C, and A to the tRNA nucleotide-73, using CTP and ATP as substrates and producing inorganic pyrophosphate. tRNA 3'-terminal CCA addition is required both for tRNA processing and repair. Also involved in tRNA surveillance by mediating tandem CCA addition to generate a CCACCA at the 3' terminus of unstable tRNAs. While stable tRNAs receive only 3'-terminal CCA, unstable tRNAs are marked with CCACCA and rapidly degraded. In Halorubrum lacusprofundi (strain ATCC 49239 / DSM 5036 / JCM 8891 / ACAM 34), this protein is CCA-adding enzyme.